Reading from the N-terminus, the 470-residue chain is Zinc finger CCCH domain-containing protein 7 (470 aa).

Residues 122 to 144 form a disordered region; the sequence is AYSKKESEKQSGQNNTSTASRNH. Polar residues predominate over residues 131-142; sequence QSGQNNTSTASR. 5 consecutive C3H1-type zinc fingers follow at residues 240–269, 273–294, 295–321, 322–349, and 350–372; these read AKKK…HDPS, VCTK…HKVI, PERM…HVHV, NPIA…HSYN, and CPVF…HPKN. A compositionally biased stretch (basic residues) spans 370–381; sequence PKNQSKGRKRKR. Residues 370–389 form a disordered region; sequence PKNQSKGRKRKRTNEPSQKN.

Possesses RNA-binding and ribonuclease activities in vitro. This Arabidopsis thaliana (Mouse-ear cress) protein is Zinc finger CCCH domain-containing protein 7.